A 547-amino-acid chain; its full sequence is Solute carrier family 22 member 7 (547 aa).

A helical transmembrane segment spans residues 21-41 (VALLALPRVLLPMHFLLPIFL). The segment covering 91–103 (NSTLWGEGQNSGE) has biased composition (polar residues). The segment at 91–112 (NSTLWGEGQNSGEQPEGEPSTV) is disordered. The next 11 membrane-spanning stretches (helical) occupy residues 145 to 165 (AIST…GYLS), 179 to 199 (VSSL…MFAI), 203 to 223 (LTGM…LEWL), 233 to 253 (VLSS…GYLI), 258 to 278 (WLLL…WWVP), 345 to 365 (ISLC…GVSL), 367 to 387 (LSGL…VELP), 403 to 423 (LTMA…ILVS), 431 to 451 (TALA…AYLF), 465 to 485 (MGLT…AALL), and 492 to 512 (LPKL…LLLP). Residues 521–547 (ETIQDVERKSAPSSLQEEEMPMKQVQD) form a disordered region.

It belongs to the major facilitator (TC 2.A.1) superfamily. Organic cation transporter (TC 2.A.1.19) family.

It is found in the basolateral cell membrane. It localises to the apical cell membrane. The protein resides in the cell membrane. It catalyses the reaction orotate(out) + L-glutamate(in) = orotate(in) + L-glutamate(out). The catalysed reaction is 3',5'-cyclic GMP(in) = 3',5'-cyclic GMP(out). It carries out the reaction GMP(in) = GMP(out). The enzyme catalyses 2'-deoxyguanosine(in) = 2'-deoxyguanosine(out). It catalyses the reaction GDP(in) = GDP(out). The catalysed reaction is guanosine(in) = guanosine(out). It carries out the reaction GTP(in) = GTP(out). The enzyme catalyses 3',5'-cyclic AMP(in) = 3',5'-cyclic AMP(out). It catalyses the reaction creatinine(in) = creatinine(out). The catalysed reaction is prostaglandin E2(out) = prostaglandin E2(in). It carries out the reaction 2-oxoglutarate(in) = 2-oxoglutarate(out). The enzyme catalyses glutarate(in) = glutarate(out). It catalyses the reaction urate(out) = urate(in). The catalysed reaction is estrone 3-sulfate(out) = estrone 3-sulfate(in). Its function is as follows. Functions as a Na(+)-independent bidirectional multispecific transporter. Contributes to the renal and hepatic elimination of endogenous organic compounds from the systemic circulation into the urine and bile, respectively. Capable of transporting a wide range of purine and pyrimidine nucleobases, nucleosides and nucleotides, with cGMP, 2'deoxyguanosine and GMP being the preferred substrates. Functions as a pH- and chloride-independent cGMP bidirectional facilitative transporter that can regulate both intracellular and extracellular levels of cGMP and may be involved in cGMP signaling pathways. Mediates orotate/glutamate bidirectional exchange and most likely display a physiological role in hepatic release of glutamate into the blood. Involved in renal secretion and possible reabsorption of creatinine. Able to uptake prostaglandin E2 (PGE2) and may contribute to PGE2 renal excretion. Also transports alpha-ketoglutarate and urate. Apart from the orotate/glutamate exchange, the counterions for the uptake of other SLC22A7/OAT2 substrates remain to be identified. This is Solute carrier family 22 member 7 (SLC22A7) from Bos taurus (Bovine).